We begin with the raw amino-acid sequence, 380 residues long: Cytochrome b (380 aa).

The next 4 membrane-spanning stretches (helical) occupy residues 33–53 (FGSL…FLAM), 77–98 (WLIR…YLHI), 113–133 (WNVG…GYVL), and 178–198 (FFAF…IHLL). The heme b site is built by histidine 83 and histidine 97. Histidine 182 and histidine 196 together coordinate heme b. Residue histidine 201 coordinates a ubiquinone. 4 helical membrane-spanning segments follow: residues 226-246 (YKDL…ALFS), 288-308 (LGGV…PILH), 320-340 (ITQF…WIGG), and 347-367 (FIII…VLTP).

This sequence belongs to the cytochrome b family. In terms of assembly, the cytochrome bc1 complex contains 3 respiratory subunits (MT-CYB, CYC1 and UQCRFS1), 2 core proteins (UQCRC1 and UQCRC2) and probably 6 low-molecular weight proteins. It depends on heme b as a cofactor.

The protein resides in the mitochondrion inner membrane. Component of the ubiquinol-cytochrome c reductase complex (complex III or cytochrome b-c1 complex) that is part of the mitochondrial respiratory chain. The b-c1 complex mediates electron transfer from ubiquinol to cytochrome c. Contributes to the generation of a proton gradient across the mitochondrial membrane that is then used for ATP synthesis. In Dactyloptena peterseni (Starry flying gurnard), this protein is Cytochrome b (mt-cyb).